The chain runs to 314 residues: MNILLANPRGFCAGVDRAISIVELALEVHGAPIYVRHEVVHNRFVVDDLKAKGAIFVEELDEVPDSAIVIFSAHGVSQAVRQEAKRRGLKVFDATCPLVTKVHMQVARASKKGTKAILIGHQGHPEVIGTMGQYYNEQAGIFLVETVEDIANLPIHHHEDLTFMTQTTLSVDDTSGMIEALKNKYPAIQGPRKNDICYATTNRQQAVRELAKQAQLVLVVGSKNSSNSNRLAELASRMGVLAKLIDGPQDILPEWLDNVETIGITAGASAPEILVQSVVAHLQTLGATSVANLVGCEENMVFEVPKELRVREVK.

Position 12 (C12) interacts with [4Fe-4S] cluster. Residues H41 and H74 each contribute to the (2E)-4-hydroxy-3-methylbut-2-enyl diphosphate site. Positions 41 and 74 each coordinate dimethylallyl diphosphate. H41 and H74 together coordinate isopentenyl diphosphate. C96 is a [4Fe-4S] cluster binding site. A (2E)-4-hydroxy-3-methylbut-2-enyl diphosphate-binding site is contributed by H124. A dimethylallyl diphosphate-binding site is contributed by H124. H124 is a binding site for isopentenyl diphosphate. Residue E126 is the Proton donor of the active site. T167 serves as a coordination point for (2E)-4-hydroxy-3-methylbut-2-enyl diphosphate. C197 is a binding site for [4Fe-4S] cluster. The (2E)-4-hydroxy-3-methylbut-2-enyl diphosphate site is built by S225, S226, N227, and S269. Dimethylallyl diphosphate-binding residues include S225, S226, N227, and S269. S225, S226, N227, and S269 together coordinate isopentenyl diphosphate.

Belongs to the IspH family. [4Fe-4S] cluster is required as a cofactor.

It catalyses the reaction isopentenyl diphosphate + 2 oxidized [2Fe-2S]-[ferredoxin] + H2O = (2E)-4-hydroxy-3-methylbut-2-enyl diphosphate + 2 reduced [2Fe-2S]-[ferredoxin] + 2 H(+). The catalysed reaction is dimethylallyl diphosphate + 2 oxidized [2Fe-2S]-[ferredoxin] + H2O = (2E)-4-hydroxy-3-methylbut-2-enyl diphosphate + 2 reduced [2Fe-2S]-[ferredoxin] + 2 H(+). It functions in the pathway isoprenoid biosynthesis; dimethylallyl diphosphate biosynthesis; dimethylallyl diphosphate from (2E)-4-hydroxy-3-methylbutenyl diphosphate: step 1/1. The protein operates within isoprenoid biosynthesis; isopentenyl diphosphate biosynthesis via DXP pathway; isopentenyl diphosphate from 1-deoxy-D-xylulose 5-phosphate: step 6/6. Functionally, catalyzes the conversion of 1-hydroxy-2-methyl-2-(E)-butenyl 4-diphosphate (HMBPP) into a mixture of isopentenyl diphosphate (IPP) and dimethylallyl diphosphate (DMAPP). Acts in the terminal step of the DOXP/MEP pathway for isoprenoid precursor biosynthesis. In Haemophilus ducreyi (strain 35000HP / ATCC 700724), this protein is 4-hydroxy-3-methylbut-2-enyl diphosphate reductase.